The primary structure comprises 750 residues: Photosystem I P700 chlorophyll a apoprotein A1 (750 aa).

Helical transmembrane passes span 70-93, 156-179, 195-219, 291-309, 346-369, 385-411, 433-455, and 531-549; these read VFSA…FHGA, LYCT…FHYH, LNHH…HVSL, IAHH…GHMY, WHAQ…HHMY, LSLF…IFMV, AIIS…LYIH, and FLVH…LILL. The [4Fe-4S] cluster site is built by cysteine 573 and cysteine 582. 2 consecutive transmembrane segments (helical) span residues 589–610 and 664–686; these read HVFL…HFSW and LSAY…MFLF. Histidine 675 contacts chlorophyll a'. The chlorophyll a site is built by methionine 683 and tyrosine 691. Position 692 (tryptophan 692) interacts with phylloquinone. Residues 724-744 form a helical membrane-spanning segment; sequence AVGVTHYLLGGIATTWAFFLA.

It belongs to the PsaA/PsaB family. The PsaA/B heterodimer binds the P700 chlorophyll special pair and subsequent electron acceptors. PSI consists of a core antenna complex that captures photons, and an electron transfer chain that converts photonic excitation into a charge separation. The eukaryotic PSI reaction center is composed of at least 11 subunits. The cofactor is P700 is a chlorophyll a/chlorophyll a' dimer, A0 is one or more chlorophyll a, A1 is one or both phylloquinones and FX is a shared 4Fe-4S iron-sulfur center..

The protein resides in the plastid. It localises to the chloroplast thylakoid membrane. It carries out the reaction reduced [plastocyanin] + hnu + oxidized [2Fe-2S]-[ferredoxin] = oxidized [plastocyanin] + reduced [2Fe-2S]-[ferredoxin]. Its function is as follows. PsaA and PsaB bind P700, the primary electron donor of photosystem I (PSI), as well as the electron acceptors A0, A1 and FX. PSI is a plastocyanin-ferredoxin oxidoreductase, converting photonic excitation into a charge separation, which transfers an electron from the donor P700 chlorophyll pair to the spectroscopically characterized acceptors A0, A1, FX, FA and FB in turn. Oxidized P700 is reduced on the lumenal side of the thylakoid membrane by plastocyanin. The chain is Photosystem I P700 chlorophyll a apoprotein A1 from Lepidium virginicum (Virginia pepperweed).